A 135-amino-acid chain; its full sequence is Large ribosomal subunit protein uL16c (135 aa).

Belongs to the universal ribosomal protein uL16 family. In terms of assembly, part of the 50S ribosomal subunit.

Its subcellular location is the plastid. The protein localises to the chloroplast. The polypeptide is Large ribosomal subunit protein uL16c (Acorus calamus var. americanus (American sweet flag)).